A 323-amino-acid chain; its full sequence is Annexin A5 (323 aa).

4 Annexin repeats span residues 17–88, 89–160, 172–244, and 248–319; these read FNDK…ALMV, PAHL…SLVQ, GQVE…AVVK, and SIQG…LLCG.

This sequence belongs to the annexin family.

In terms of biological role, calcium/phospholipid-binding protein which promotes membrane fusion and is involved in exocytosis. The chain is Annexin A5 from Cynops pyrrhogaster (Japanese fire-bellied newt).